A 359-amino-acid polypeptide reads, in one-letter code: Cytohesin-interacting protein (359 aa).

A PDZ domain is found at 77-166 (VVTVEKQDNG…LLTIETLNGT (90 aa)). Positions 165–188 (GTMIHRRAELEAKLQTLKQTLKKK) form a coiled coil. Positions 166-188 (TMIHRRAELEAKLQTLKQTLKKK) are interaction with CYTH1.

In terms of assembly, interacts with CYTH1 and SNX27.

It is found in the cytoplasm. It localises to the early endosome. Functionally, by its binding to cytohesin-1 (CYTH1), it modifies activation of ARFs by CYTH1 and its precise function may be to sequester CYTH1 in the cytoplasm. This is Cytohesin-interacting protein (Cytip) from Mus musculus (Mouse).